The chain runs to 55 residues: ATP synthase F(0) complex subunit 8 (55 aa).

Residues 4–24 traverse the membrane as a helical segment; the sequence is LNPSPWFIILLFSWVIFMVIL.

It belongs to the ATPase protein 8 family. In terms of assembly, component of the ATP synthase complex composed at least of ATP5F1A/subunit alpha, ATP5F1B/subunit beta, ATP5MC1/subunit c (homooctomer), MT-ATP6/subunit a, MT-ATP8/subunit 8, ATP5ME/subunit e, ATP5MF/subunit f, ATP5MG/subunit g, ATP5MK/subunit k, ATP5MJ/subunit j, ATP5F1C/subunit gamma, ATP5F1D/subunit delta, ATP5F1E/subunit epsilon, ATP5PF/subunit F6, ATP5PB/subunit b, ATP5PD/subunit d, ATP5PO/subunit OSCP. ATP synthase complex consists of a soluble F(1) head domain (subunits alpha(3) and beta(3)) - the catalytic core - and a membrane F(0) domain - the membrane proton channel (subunits c, a, 8, e, f, g, k and j). These two domains are linked by a central stalk (subunits gamma, delta, and epsilon) rotating inside the F1 region and a stationary peripheral stalk (subunits F6, b, d, and OSCP).

Its subcellular location is the mitochondrion membrane. In terms of biological role, subunit 8, of the mitochondrial membrane ATP synthase complex (F(1)F(0) ATP synthase or Complex V) that produces ATP from ADP in the presence of a proton gradient across the membrane which is generated by electron transport complexes of the respiratory chain. ATP synthase complex consist of a soluble F(1) head domain - the catalytic core - and a membrane F(1) domain - the membrane proton channel. These two domains are linked by a central stalk rotating inside the F(1) region and a stationary peripheral stalk. During catalysis, ATP synthesis in the catalytic domain of F(1) is coupled via a rotary mechanism of the central stalk subunits to proton translocation. In vivo, can only synthesize ATP although its ATP hydrolase activity can be activated artificially in vitro. Part of the complex F(0) domain. The chain is ATP synthase F(0) complex subunit 8 from Scyliorhinus canicula (Small-spotted catshark).